A 150-amino-acid chain; its full sequence is UPF0178 protein Sbal195_1808 (150 aa).

Belongs to the UPF0178 family.

This chain is UPF0178 protein Sbal195_1808, found in Shewanella baltica (strain OS195).